A 463-amino-acid chain; its full sequence is Chromosomal replication initiator protein DnaA (463 aa).

Residues 1-84 (MNTNQIILTN…QLFQHYNNAI (84 aa)) form a domain I, interacts with DnaA modulators region. Residues 84-124 (IKTVEIITKELPASNQATLELPTKTFADIGSSELNSENIFS) form a domain II region. Residues 125–343 (TFDIRFTFDN…GALNKVIAHS (219 aa)) form a domain III, AAA+ region region. ATP is bound by residues Gly171, Gly173, Lys174, and Thr175. The domain IV, binds dsDNA stretch occupies residues 344 to 463 (NFTAKEITLE…INLMMKILQN (120 aa)).

The protein belongs to the DnaA family. In terms of assembly, oligomerizes as a right-handed, spiral filament on DNA at oriC.

The protein resides in the cytoplasm. Plays an essential role in the initiation and regulation of chromosomal replication. ATP-DnaA binds to the origin of replication (oriC) to initiate formation of the DNA replication initiation complex once per cell cycle. Binds the DnaA box (a 9 base pair repeat at the origin) and separates the double-stranded (ds)DNA. Forms a right-handed helical filament on oriC DNA; dsDNA binds to the exterior of the filament while single-stranded (ss)DNA is stabiized in the filament's interior. The ATP-DnaA-oriC complex binds and stabilizes one strand of the AT-rich DNA unwinding element (DUE), permitting loading of DNA polymerase. After initiation quickly degrades to an ADP-DnaA complex that is not apt for DNA replication. Binds acidic phospholipids. The polypeptide is Chromosomal replication initiator protein DnaA (Rickettsia bellii (strain RML369-C)).